The chain runs to 256 residues: Imidazole glycerol phosphate synthase subunit HisF (256 aa).

Catalysis depends on residues Asp11 and Asp130.

This sequence belongs to the HisA/HisF family. As to quaternary structure, heterodimer of HisH and HisF.

It localises to the cytoplasm. The enzyme catalyses 5-[(5-phospho-1-deoxy-D-ribulos-1-ylimino)methylamino]-1-(5-phospho-beta-D-ribosyl)imidazole-4-carboxamide + L-glutamine = D-erythro-1-(imidazol-4-yl)glycerol 3-phosphate + 5-amino-1-(5-phospho-beta-D-ribosyl)imidazole-4-carboxamide + L-glutamate + H(+). It participates in amino-acid biosynthesis; L-histidine biosynthesis; L-histidine from 5-phospho-alpha-D-ribose 1-diphosphate: step 5/9. In terms of biological role, IGPS catalyzes the conversion of PRFAR and glutamine to IGP, AICAR and glutamate. The HisF subunit catalyzes the cyclization activity that produces IGP and AICAR from PRFAR using the ammonia provided by the HisH subunit. This is Imidazole glycerol phosphate synthase subunit HisF from Prochlorococcus marinus (strain MIT 9215).